The primary structure comprises 187 residues: Large ribosomal subunit protein uL10 (187 aa).

Belongs to the universal ribosomal protein uL10 family. Part of the ribosomal stalk of the 50S ribosomal subunit. The N-terminus interacts with L11 and the large rRNA to form the base of the stalk. The C-terminus forms an elongated spine to which L12 dimers bind in a sequential fashion forming a multimeric L10(L12)X complex.

In terms of biological role, forms part of the ribosomal stalk, playing a central role in the interaction of the ribosome with GTP-bound translation factors. In Synechococcus sp. (strain JA-3-3Ab) (Cyanobacteria bacterium Yellowstone A-Prime), this protein is Large ribosomal subunit protein uL10.